The sequence spans 632 residues: Chaperone protein DnaK (632 aa).

Phosphothreonine; by autocatalysis is present on Thr-199. A compositionally biased stretch (low complexity) spans Ala-597–Glu-611. A disordered region spans residues Ala-597–Lys-632. Polar residues predominate over residues Pro-612–Ala-621.

This sequence belongs to the heat shock protein 70 family.

Acts as a chaperone. In Amoebophilus asiaticus (strain 5a2), this protein is Chaperone protein DnaK.